We begin with the raw amino-acid sequence, 146 residues long: Transcriptional regulator MraZ (146 aa).

2 SpoVT-AbrB domains span residues 7 to 54 (NATN…GLDL) and 83 to 126 (GVFV…QPEA).

Belongs to the MraZ family. As to quaternary structure, forms oligomers.

Its subcellular location is the cytoplasm. It is found in the nucleoid. This is Transcriptional regulator MraZ from Rhizobium rhizogenes (strain K84 / ATCC BAA-868) (Agrobacterium radiobacter).